Consider the following 407-residue polypeptide: Multifunctional CCA protein (407 aa).

Positions 8 and 11 each coordinate ATP. Positions 8 and 11 each coordinate CTP. Residues aspartate 21 and aspartate 23 each contribute to the Mg(2+) site. Residues arginine 91, arginine 137, and arginine 140 each coordinate ATP. 3 residues coordinate CTP: arginine 91, arginine 137, and arginine 140. Residues 228–329 (TGIHTLLVAE…VKIFNKLDVW (102 aa)) enclose the HD domain.

Belongs to the tRNA nucleotidyltransferase/poly(A) polymerase family. Bacterial CCA-adding enzyme type 1 subfamily. As to quaternary structure, monomer. Can also form homodimers and oligomers. Mg(2+) is required as a cofactor. It depends on Ni(2+) as a cofactor.

The enzyme catalyses a tRNA precursor + 2 CTP + ATP = a tRNA with a 3' CCA end + 3 diphosphate. The catalysed reaction is a tRNA with a 3' CCA end + 2 CTP + ATP = a tRNA with a 3' CCACCA end + 3 diphosphate. Its function is as follows. Catalyzes the addition and repair of the essential 3'-terminal CCA sequence in tRNAs without using a nucleic acid template. Adds these three nucleotides in the order of C, C, and A to the tRNA nucleotide-73, using CTP and ATP as substrates and producing inorganic pyrophosphate. tRNA 3'-terminal CCA addition is required both for tRNA processing and repair. Also involved in tRNA surveillance by mediating tandem CCA addition to generate a CCACCA at the 3' terminus of unstable tRNAs. While stable tRNAs receive only 3'-terminal CCA, unstable tRNAs are marked with CCACCA and rapidly degraded. This is Multifunctional CCA protein from Vibrio vulnificus (strain YJ016).